A 451-amino-acid polypeptide reads, in one-letter code: Phosphoglucosamine mutase (451 aa).

The Phosphoserine intermediate role is filled by Ser107. 4 residues coordinate Mg(2+): Ser107, Asp246, Asp248, and Asp250. Ser107 bears the Phosphoserine mark.

It belongs to the phosphohexose mutase family. Mg(2+) is required as a cofactor. Activated by phosphorylation.

It carries out the reaction alpha-D-glucosamine 1-phosphate = D-glucosamine 6-phosphate. In terms of biological role, catalyzes the conversion of glucosamine-6-phosphate to glucosamine-1-phosphate. The polypeptide is Phosphoglucosamine mutase (Azoarcus sp. (strain BH72)).